The following is a 257-amino-acid chain: Major prion protein (257 aa).

The signal sequence occupies residues 1-24 (MVKSHIGGWILLLFVATWSDVGLC). The segment at 25–234 (KKRPKPGGWN…ESEAYYQRGA (210 aa)) is interaction with GRB2, ERI3 and SYN1. Residues 28 to 110 (PKPGGWNTGG…GQWGKPNKPK (83 aa)) are disordered. Gly residues-rich tracts occupy residues 33 to 48 (WNTG…GSPG) and 55 to 101 (QGGG…GSHG). 5 consecutive repeat copies span residues 54-62 (PQGGGGWGQ), 63-70 (PHGGGWGQ), 71-78 (PHGGGWGQ), 79-86 (PHGGGWGQ), and 87-95 (PHGGGGWGQ). The segment at 54 to 95 (PQGGGGWGQPHGGGWGQPHGGGWGQPHGGGWGQPHGGGGWGQ) is 5 X 8 AA tandem repeats of P-H-G-G-G-W-G-Q. The Cu(2+) site is built by His-64, Gly-65, Gly-66, His-72, Gly-73, Gly-74, His-80, Gly-81, Gly-82, His-88, Gly-90, and Gly-91. Residues Cys-183 and Cys-218 are joined by a disulfide bond. 2 N-linked (GlcNAc...) asparagine glycosylation sites follow: Asn-185 and Asn-201. A lipid anchor (GPI-anchor amidated alanine) is attached at Ala-234. Residues 235-257 (SAILFSPPPVILLISLLILLIVG) constitute a propeptide, removed in mature form.

The protein belongs to the prion family. In terms of assembly, monomer and homodimer. Has a tendency to aggregate into amyloid fibrils containing a cross-beta spine, formed by a steric zipper of superposed beta-strands. Soluble oligomers may represent an intermediate stage on the path to fibril formation. Copper binding may promote oligomerization. Interacts with GRB2, APP, ERI3/PRNPIP and SYN1. Mislocalized cytosolically exposed PrP interacts with MGRN1; this interaction alters MGRN1 subcellular location and causes lysosomal enlargement. Interacts with KIAA1191.

It localises to the cell membrane. Its subcellular location is the golgi apparatus. In terms of biological role, its primary physiological function is unclear. Has cytoprotective activity against internal or environmental stresses. May play a role in neuronal development and synaptic plasticity. May be required for neuronal myelin sheath maintenance. May play a role in iron uptake and iron homeostasis. Soluble oligomers are toxic to cultured neuroblastoma cells and induce apoptosis (in vitro). Association with GPC1 (via its heparan sulfate chains) targets PRNP to lipid rafts. Also provides Cu(2+) or Zn(2+) for the ascorbate-mediated GPC1 deaminase degradation of its heparan sulfate side chains. The sequence is that of Major prion protein from Vulpes lagopus (Arctic fox).